The primary structure comprises 41 residues: Large ribosomal subunit protein bL36 (41 aa).

Belongs to the bacterial ribosomal protein bL36 family.

The chain is Large ribosomal subunit protein bL36 from Ruegeria sp. (strain TM1040) (Silicibacter sp.).